The sequence spans 414 residues: Serine/threonine transporter SstT (414 aa).

Transmembrane regions (helical) follow at residues 19-39, 55-75, 89-109, 148-168, 189-209, 223-243, 297-317, 323-343, and 363-383; these read IIVG…LEPV, FVKG…IAAI, IVML…LASF, ALAT…GIAL, IVHL…AATL, LLLV…PFIV, IPLG…VLTL, LGIP…AVCA, and LFGI…VIGV.

This sequence belongs to the dicarboxylate/amino acid:cation symporter (DAACS) (TC 2.A.23) family.

It localises to the cell inner membrane. The enzyme catalyses L-serine(in) + Na(+)(in) = L-serine(out) + Na(+)(out). The catalysed reaction is L-threonine(in) + Na(+)(in) = L-threonine(out) + Na(+)(out). Its function is as follows. Involved in the import of serine and threonine into the cell, with the concomitant import of sodium (symport system). This chain is Serine/threonine transporter SstT, found in Actinobacillus succinogenes (strain ATCC 55618 / DSM 22257 / CCUG 43843 / 130Z).